The primary structure comprises 766 residues: Serine/threonine-protein kinase PKH1 (766 aa).

Residues 1 to 52 (MGNRSLTEADHALLSKPLVPTSAEHTQTQEYPRPFVDGSNSQSGSELQASPQ) form a disordered region. Over residues 38-52 (GSNSQSGSELQASPQ) the composition is skewed to polar residues. Residues 125 to 391 (FKFGEQLGDG…IKQIKAHLFF (267 aa)) enclose the Protein kinase domain. ATP-binding positions include 135-137 (SYS) and lysine 154. The interval 156–201 (LSKEYLIRQKKVKYVTVEKLALQKLNGTKGIFKLFFTFQDEASLYF) is PIF-pocket. ATP is bound by residues 204 to 206 (EYA) and aspartate 210. The Proton acceptor role is filled by aspartate 249. Residues glutamate 253 and aspartate 267 each coordinate ATP. Phosphoserine occurs at positions 294 and 296. Over residues 476-495 (TSQPKLGSKSSTSVRSASNN) the composition is skewed to polar residues. Disordered regions lie at residues 476–529 (TSQP…NRSR) and 725–745 (PEEG…SSSN). Low complexity predominate over residues 511–521 (SVSSPSISTTS). Positions 735-745 (PTSLQTRSSSN) are enriched in polar residues.

This sequence belongs to the protein kinase superfamily. AGC Ser/Thr protein kinase family. PDPK1 subfamily.

It catalyses the reaction L-seryl-[protein] + ATP = O-phospho-L-seryl-[protein] + ADP + H(+). It carries out the reaction L-threonyl-[protein] + ATP = O-phospho-L-threonyl-[protein] + ADP + H(+). Functionally, activates YPK1 by phosphorylating of a threonine residue. The sequence is that of Serine/threonine-protein kinase PKH1 (PKH1) from Saccharomyces cerevisiae (strain ATCC 204508 / S288c) (Baker's yeast).